Consider the following 239-residue polypeptide: Phosphothreonine lyase OspF (239 aa).

Catalysis depends on His-104, which acts as the Proton donor. Lys-134 (proton acceptor) is an active-site residue.

It belongs to the phosphothreonine lyase family.

It localises to the secreted. Catalyzes the removal of the phosphate group from the phosphothreonine in the mitogen-activated protein kinases p38, phosphothreonine in the mitogen-activated protein kinases such as MAPK2/ERK2, MAPK3/ERK1, MAPK8 and MAPK14 in an irreversible reaction, thus preventing the downstream phosphorylation of histone H3. This epigenetic modification results in inhibition of the transcription of a specific subset of pro-inflammatory genes, and ultimately to a reduced immune response against the invading pathogen. The diminished immune response enhances the bacterium's ability to disseminate and multiply within the host. In Shigella boydii serotype 4 (strain Sb227), this protein is Phosphothreonine lyase OspF (ospF).